A 102-amino-acid chain; its full sequence is Small ribosomal subunit protein uS10 (102 aa).

This sequence belongs to the universal ribosomal protein uS10 family. As to quaternary structure, part of the 30S ribosomal subunit.

Functionally, involved in the binding of tRNA to the ribosomes. This chain is Small ribosomal subunit protein uS10, found in Opitutus terrae (strain DSM 11246 / JCM 15787 / PB90-1).